Consider the following 136-residue polypeptide: Probable flagellum biosynthesis repressor protein FlbT 2 (136 aa).

This sequence belongs to the FlbT family.

Has a post-transcriptional repressor function in flagellum biogenesis. Associates with the 5'-UTR of fljK mRNA and promotes its degradation. This is Probable flagellum biosynthesis repressor protein FlbT 2 from Bradyrhizobium diazoefficiens (strain JCM 10833 / BCRC 13528 / IAM 13628 / NBRC 14792 / USDA 110).